The following is a 505-amino-acid chain: Photosystem II CP47 reaction center protein (505 aa).

At 1 to 19 (GLPWYRVHTVLINDPGRLI) the chain is on the cytoplasmic side. Residues His-8, His-22, His-25, His-99, and His-113 each contribute to the chlorophyll a site. The chain crosses the membrane as a helical span at residues 20–35 (AAHLMHTALVAGWAGS). Residues 36 to 99 (MALYELATFD…WSFEGVALAH (64 aa)) lie on the Lumenal side of the membrane. A helical transmembrane segment spans residues 100–114 (IVLSGLLFLAACWHW). At 115-138 (VYWDLELFRDPRTGEPALDLPKMF) the chain is on the cytoplasmic side. A helical transmembrane segment spans residues 139 to 155 (GIHLFLAGLLCFGFGAF). Positions 141, 156, 200, 201, and 215 each coordinate chlorophyll a. Residues 156-201 (HLTGLFGPGMWVSDPYGLTGSVQPVAPEWGPDGFNPYNPGGVVAHH) lie on the Lumenal side of the membrane. The chain crosses the membrane as a helical span at residues 202–217 (IAAGIVGIIAGLFHIL). The Cytoplasmic portion of the chain corresponds to 218–235 (VRPPQRLYKALRMGNIET). A helical transmembrane segment spans residues 236–251 (VLSSSIAAVFFAAFVV). Over 252-455 (AGTMWYGSAT…PRGWFTFAHA (204 aa)) the chain is Lumenal. 3 residues coordinate chlorophyll a: His-454, His-465, and His-468. The chain crosses the membrane as a helical span at residues 456-471 (VFALLFFFGHIWHGAR). Over 472-505 (TLFRDVFSGIDPELSPEQVEWGFYQKVGDVTTRK) the chain is Cytoplasmic.

It belongs to the PsbB/PsbC family. PsbB subfamily. As to quaternary structure, PSII is composed of 1 copy each of membrane proteins PsbA, PsbB, PsbC, PsbD, PsbE, PsbF, PsbH, PsbI, PsbJ, PsbK, PsbL, PsbM, PsbT, PsbX, PsbY, PsbZ, Psb30/Ycf12, peripheral proteins PsbO, CyanoQ (PsbQ), PsbU, PsbV and a large number of cofactors. It forms dimeric complexes. Binds multiple chlorophylls. PSII binds additional chlorophylls, carotenoids and specific lipids. serves as cofactor.

Its subcellular location is the cellular thylakoid membrane. In terms of biological role, one of the components of the core complex of photosystem II (PSII). It binds chlorophyll and helps catalyze the primary light-induced photochemical processes of PSII. PSII is a light-driven water:plastoquinone oxidoreductase, using light energy to abstract electrons from H(2)O, generating O(2) and a proton gradient subsequently used for ATP formation. The chain is Photosystem II CP47 reaction center protein from Thermostichus vulcanus (Synechococcus vulcanus).